A 341-amino-acid chain; its full sequence is Phenylalanine--tRNA ligase alpha subunit (341 aa).

Glu-254 is a Mg(2+) binding site.

It belongs to the class-II aminoacyl-tRNA synthetase family. Phe-tRNA synthetase alpha subunit type 1 subfamily. As to quaternary structure, tetramer of two alpha and two beta subunits. The cofactor is Mg(2+).

The protein resides in the cytoplasm. The enzyme catalyses tRNA(Phe) + L-phenylalanine + ATP = L-phenylalanyl-tRNA(Phe) + AMP + diphosphate + H(+). The polypeptide is Phenylalanine--tRNA ligase alpha subunit (Chlorobium phaeobacteroides (strain DSM 266 / SMG 266 / 2430)).